Consider the following 257-residue polypeptide: Imidazole glycerol phosphate synthase subunit HisF (257 aa).

Active-site residues include Asp-11 and Asp-130.

It belongs to the HisA/HisF family. In terms of assembly, heterodimer of HisH and HisF.

The protein resides in the cytoplasm. It catalyses the reaction 5-[(5-phospho-1-deoxy-D-ribulos-1-ylimino)methylamino]-1-(5-phospho-beta-D-ribosyl)imidazole-4-carboxamide + L-glutamine = D-erythro-1-(imidazol-4-yl)glycerol 3-phosphate + 5-amino-1-(5-phospho-beta-D-ribosyl)imidazole-4-carboxamide + L-glutamate + H(+). It functions in the pathway amino-acid biosynthesis; L-histidine biosynthesis; L-histidine from 5-phospho-alpha-D-ribose 1-diphosphate: step 5/9. IGPS catalyzes the conversion of PRFAR and glutamine to IGP, AICAR and glutamate. The HisF subunit catalyzes the cyclization activity that produces IGP and AICAR from PRFAR using the ammonia provided by the HisH subunit. The chain is Imidazole glycerol phosphate synthase subunit HisF from Shewanella halifaxensis (strain HAW-EB4).